A 788-amino-acid polypeptide reads, in one-letter code: Cyclin-F (788 aa).

Positions 20–28 (KRRIRRRPR) match the Nuclear localization signal 1 motif. One can recognise an F-box domain in the interval 29–76 (NLTILNLPEDALFHILKWLSVGDILAVRAVHSHLKYLVDNHASVWACA). Residues 291 to 405 (HAVNKQRVFS…EVVSALDGKI (115 aa)) enclose the Cyclin N-terminal domain. 4 short sequence motifs (d box) span residues 310–313 (RYIL), 343–346 (RRRL), 349–352 (RYRL), and 351–354 (RLQL). Disordered stretches follow at residues 566 to 585 (SARRTKRKRENSLQEDRGSF) and 700 to 788 (TSGY…FLKL). The Nuclear localization signal 2 motif lies at 568–574 (RRTKRKR). Residues 582-766 (RGSFVTTPTA…ESCAPQQQVK (185 aa)) form a PEST region. 2 stretches are compositionally biased toward polar residues: residues 700–716 (TSGYSSVNSASPTDSGR) and 723–738 (RSTSELPTGSSLNTQP). Residues 767 to 770 (RKNL) carry the D box 5 motif.

This sequence belongs to the cyclin family. Cyclin AB subfamily. As to quaternary structure, component of the SCF(CCNF) complex consisting of CUL1, RBX1, SKP1 and CCNF. Interacts with SKP1. Interacts with CUL1. Interacts with CCNB1; interaction is required for nuclear localization of CCNB1. Interacts with CCP110; this interaction leads to CCP110 ubiquitination and degradation via the proteasome pathway. Interacts (via the Cyclin N-terminal domain) with MYBL2/BMYB. Interacts with FZR1/CDH1 (via N-terminus). Interacts with RRM2 (via Cy motif and when phosphorylated at 'Thr-33'); the interaction occurs exclusively in G2 and early M. Interacts with CDC6 (via Cy motif); the interaction takes place during G2 and M phase. Degraded when the spindle assembly checkpoint is activated during the G2-M transition. Degradation is not dependent on the proteasome or ubiquitin and depends on the C-terminal PEST sequence. In terms of processing, phosphorylated just before cells enter into mitosis. Post-translationally, ubiquitinated by the anaphase-promoting complex (APC/C); leading to its degradation by the proteasome.

The protein localises to the nucleus. Its subcellular location is the cytoplasm. The protein resides in the perinuclear region. It is found in the cytoskeleton. It localises to the microtubule organizing center. The protein localises to the centrosome. Its subcellular location is the centriole. Substrate recognition component of a SCF (SKP1-CUL1-F-box protein) E3 ubiquitin-protein ligase complex which mediates the ubiquitination and subsequent proteasomal degradation of target proteins. The SCF(CCNF) E3 ubiquitin-protein ligase complex is an integral component of the ubiquitin proteasome system (UPS) and links proteasome degradation to the cell cycle. Mediates the substrate recognition and the proteasomal degradation of various target proteins involved in the regulation of cell cycle progression and in the maintenance of genome stability. Mediates the ubiquitination and subsequent proteasomal degradation of CP110 during G2 phase, thereby acting as an inhibitor of centrosome reduplication. In G2, mediates the ubiquitination and proteasomal degradation of CDC6, thereby suppressing DNA re-replication and preventing genome instability. Involved in the ubiquitination and degradation of the substrate adapter CDH1 of the anaphase-promoting complex (APC/C), thereby acting as an antagonist of APC/C in regulating G1 progression and S phase entry. May play a role in the G2 cell cycle checkpoint control after DNA damage, possibly by promoting the ubiquitination of MYBL2/BMYB. This Bos taurus (Bovine) protein is Cyclin-F (CCNF).